The primary structure comprises 182 residues: DOMON domain-containing protein Y73F4A.1 (182 aa).

The signal sequence occupies residues 1 to 18; that stretch reads MFVLAIVFAFVFIPSSSS. One can recognise a DOMON domain in the interval 26-143; sequence ELVSMNWNVK…CLNWMVVPGG (118 aa). Residues asparagine 47 and asparagine 128 are each glycosylated (N-linked (GlcNAc...) asparagine).

The protein resides in the secreted. The sequence is that of DOMON domain-containing protein Y73F4A.1 from Caenorhabditis elegans.